A 229-amino-acid chain; its full sequence is Enolase-phosphatase E1 (229 aa).

This sequence belongs to the HAD-like hydrolase superfamily. MasA/MtnC family. In terms of assembly, monomer. The cofactor is Mg(2+).

The catalysed reaction is 5-methylsulfanyl-2,3-dioxopentyl phosphate + H2O = 1,2-dihydroxy-5-(methylsulfanyl)pent-1-en-3-one + phosphate. Its pathway is amino-acid biosynthesis; L-methionine biosynthesis via salvage pathway; L-methionine from S-methyl-5-thio-alpha-D-ribose 1-phosphate: step 3/6. It participates in amino-acid biosynthesis; L-methionine biosynthesis via salvage pathway; L-methionine from S-methyl-5-thio-alpha-D-ribose 1-phosphate: step 4/6. Its function is as follows. Bifunctional enzyme that catalyzes the enolization of 2,3-diketo-5-methylthiopentyl-1-phosphate (DK-MTP-1-P) into the intermediate 2-hydroxy-3-keto-5-methylthiopentenyl-1-phosphate (HK-MTPenyl-1-P), which is then dephosphorylated to form the acireductone 1,2-dihydroxy-3-keto-5-methylthiopentene (DHK-MTPene). This chain is Enolase-phosphatase E1, found in Yersinia pestis (strain Pestoides F).